The sequence spans 263 residues: Uroplakin-3b-like protein 1 (263 aa).

The N-terminal stretch at 1–33 (MDNSWRLGPAIGLSAGQSQLLVSLLLLLTRVQP) is a signal peptide. Residues 34 to 204 (GTDVAAPEHI…PGPQSPGTVV (171 aa)) are Extracellular-facing. N-linked (GlcNAc...) asparagine glycosylation is found at N51, N76, and N91. Residues 205-225 (IIAILSILLAVLLTVLLAVLI) form a helical membrane-spanning segment. Residues 226–263 (YTCFNSCRSTSLSGPEEAGSVRRYTTHLAFSTPAEGAS) lie on the Cytoplasmic side of the membrane.

This sequence belongs to the uroplakin-3 family.

It localises to the membrane. The sequence is that of Uroplakin-3b-like protein 1 from Homo sapiens (Human).